Consider the following 313-residue polypeptide: Methionyl-tRNA formyltransferase (313 aa).

113–116 (SLLP) is a binding site for (6S)-5,6,7,8-tetrahydrofolate.

Belongs to the Fmt family.

It carries out the reaction L-methionyl-tRNA(fMet) + (6R)-10-formyltetrahydrofolate = N-formyl-L-methionyl-tRNA(fMet) + (6S)-5,6,7,8-tetrahydrofolate + H(+). Attaches a formyl group to the free amino group of methionyl-tRNA(fMet). The formyl group appears to play a dual role in the initiator identity of N-formylmethionyl-tRNA by promoting its recognition by IF2 and preventing the misappropriation of this tRNA by the elongation apparatus. This Francisella tularensis subsp. tularensis (strain FSC 198) protein is Methionyl-tRNA formyltransferase.